The following is a 511-amino-acid chain: MEELQRYLEIDRSRQQHFLYPLLFQEYIYVLAHDHGLNGSILYESMENLGYDNKSSSLIIKRLIIRMHQQNHLMISVNHSNQNRFLGYNKNFDYQMISEGFAVIVEIPFSLQLVSSLEEKEIAKFHNLRSIHSILPFLEDKFSHLNYVSDILIPYPTHLEILVQTLHRWIQDAPSLHLLRFFLHEYTNWNSFITPKKSIYLFTKDFTKENQRLFLFLYNSHVYECESVFIFLRKQSSYLGSKYSGAFIERTHFYGKMEYLVVVLRNDFQKTLWLFKDPFMHYVRYQGKAILASKGAHLLMKKWKYHLVNFWQCHFYLWYQPDRIHINQLSNHSFYFLGYLSSVLLNLSAVRSQMLENSFLINTAIKKFDTIVPIIPLIGALAKAKFCNISGHPISKPVRVDSSDSDIIDRFGRICRNLSHYHSGSSKKQSLYRIKYILRFSCARTLARKHKSTVRTFLKRLGSELLEEFLTEKEQVISLIFAINSSPSHRSYRERIWYLDILCINDLANHE.

The protein belongs to the intron maturase 2 family. MatK subfamily.

It localises to the plastid. The protein resides in the chloroplast. In terms of biological role, usually encoded in the trnK tRNA gene intron. Probably assists in splicing its own and other chloroplast group II introns. The protein is Maturase K of Chloranthus spicatus (Chulantree).